The chain runs to 612 residues: 1,8-cineole synthase, chloroplastic (612 aa).

Residues 1 to 52 (MALVCGAPLASRSCLNKSLISSTHELKPLRRTILPTLRWKSATPSINMCLTT) constitute a chloroplast transit peptide. Residues Asp-363, Asp-367, and Asp-515 each coordinate Mg(2+). Residues 363–367 (DDIYD) carry the DDXXD motif motif.

This sequence belongs to the terpene synthase family. Tpsd subfamily. Requires Mg(2+) as cofactor. It depends on Mn(2+) as a cofactor.

It is found in the plastid. The protein localises to the chloroplast. It catalyses the reaction (2E)-geranyl diphosphate + H2O = 1,8-cineole + diphosphate. The protein operates within terpene metabolism; oleoresin biosynthesis. Terpene synthase (TPS) involved in the biosynthesis of monoterpene natural products included in conifer oleoresin secretions and volatile emissions; these compounds contribute to biotic and abiotic stress defense against herbivores and pathogens. Catalyzes the conversion of (2E)-geranyl diphosphate (GPP) to 1,8-cineole. The polypeptide is 1,8-cineole synthase, chloroplastic (Picea glauca (White spruce)).